The chain runs to 690 residues: Elongation factor G (690 aa).

The tr-type G domain occupies 8–283; that stretch reads SRCRNIGIMA…AVVDFLPSPS (276 aa). GTP-binding positions include 17 to 24, 81 to 85, and 135 to 138; these read AHIDAGKT, DTPGH, and NKMD.

It belongs to the TRAFAC class translation factor GTPase superfamily. Classic translation factor GTPase family. EF-G/EF-2 subfamily.

Its subcellular location is the cytoplasm. Its function is as follows. Catalyzes the GTP-dependent ribosomal translocation step during translation elongation. During this step, the ribosome changes from the pre-translocational (PRE) to the post-translocational (POST) state as the newly formed A-site-bound peptidyl-tRNA and P-site-bound deacylated tRNA move to the P and E sites, respectively. Catalyzes the coordinated movement of the two tRNA molecules, the mRNA and conformational changes in the ribosome. This chain is Elongation factor G, found in Anaplasma marginale (strain Florida).